The primary structure comprises 322 residues: Transcriptional activator protein Pur-alpha (322 aa).

The interval 1–55 (MADRDSGSEQGGAALGSGGSLGHPGSGSGSGGGGGGGGGGGGSGGGGGGAPGGLQ) is disordered. Alanine 2 bears the N-acetylalanine mark. Residues 9–52 (EQGGAALGSGGSLGHPGSGSGSGGGGGGGGGGGGSGGGGGGAPG) show a composition bias toward gly residues. A PUR repeat I repeat occupies 60–125 (ELASKRVDIQ…DFIEHYAQLG (66 aa)). Residues 142–213 (ALKSEFLVRE…KLIDDYGVEE (72 aa)) form a PUR repeat II repeat. Serine 182 is subject to Phosphoserine. A PUR repeat III repeat occupies 215–281 (PAELPEGTSL…CKYSEEMKKI (67 aa)). The segment covering 295 to 314 (LHQQQQQQQEETAAATLLLQ) has biased composition (low complexity). The disordered stretch occupies residues 295-322 (LHQQQQQQQEETAAATLLLQGEEEGEED).

The protein belongs to the PUR DNA-binding protein family. Homodimer, heterodimer with PURB and heterotrimer with PURB and YBX1/Y-box protein 1. Interacts with FMR1; this interaction occurs in association with polyribosome.

It is found in the nucleus. Functionally, this is a probable transcription activator that specifically binds the purine-rich single strand of the PUR element located upstream of the MYC gene. May play a role in the initiation of DNA replication and in recombination. The polypeptide is Transcriptional activator protein Pur-alpha (PURA) (Homo sapiens (Human)).